The following is a 494-amino-acid chain: UDP-N-acetylmuramoyl-L-alanyl-D-glutamate--2,6-diaminopimelate ligase (494 aa).

Position 32 (serine 32) interacts with UDP-N-acetyl-alpha-D-muramoyl-L-alanyl-D-glutamate. 112 to 118 (GTNGKTT) contributes to the ATP binding site. UDP-N-acetyl-alpha-D-muramoyl-L-alanyl-D-glutamate-binding positions include asparagine 153, 154–155 (TT), serine 181, and arginine 189. The residue at position 221 (lysine 221) is an N6-carboxylysine. Meso-2,6-diaminopimelate is bound by residues arginine 383, 407–410 (DNPR), glycine 459, and glutamate 463. Positions 407 to 410 (DNPR) match the Meso-diaminopimelate recognition motif motif.

This sequence belongs to the MurCDEF family. MurE subfamily. The cofactor is Mg(2+). Post-translationally, carboxylation is probably crucial for Mg(2+) binding and, consequently, for the gamma-phosphate positioning of ATP.

It is found in the cytoplasm. It carries out the reaction UDP-N-acetyl-alpha-D-muramoyl-L-alanyl-D-glutamate + meso-2,6-diaminopimelate + ATP = UDP-N-acetyl-alpha-D-muramoyl-L-alanyl-gamma-D-glutamyl-meso-2,6-diaminopimelate + ADP + phosphate + H(+). It participates in cell wall biogenesis; peptidoglycan biosynthesis. Catalyzes the addition of meso-diaminopimelic acid to the nucleotide precursor UDP-N-acetylmuramoyl-L-alanyl-D-glutamate (UMAG) in the biosynthesis of bacterial cell-wall peptidoglycan. This is UDP-N-acetylmuramoyl-L-alanyl-D-glutamate--2,6-diaminopimelate ligase from Solibacter usitatus (strain Ellin6076).